The sequence spans 180 residues: ATP synthase subunit delta (180 aa).

This sequence belongs to the ATPase delta chain family. As to quaternary structure, F-type ATPases have 2 components, F(1) - the catalytic core - and F(0) - the membrane proton channel. F(1) has five subunits: alpha(3), beta(3), gamma(1), delta(1), epsilon(1). F(0) has three main subunits: a(1), b(2) and c(10-14). The alpha and beta chains form an alternating ring which encloses part of the gamma chain. F(1) is attached to F(0) by a central stalk formed by the gamma and epsilon chains, while a peripheral stalk is formed by the delta and b chains.

Its subcellular location is the cell membrane. Its function is as follows. F(1)F(0) ATP synthase produces ATP from ADP in the presence of a proton or sodium gradient. F-type ATPases consist of two structural domains, F(1) containing the extramembraneous catalytic core and F(0) containing the membrane proton channel, linked together by a central stalk and a peripheral stalk. During catalysis, ATP synthesis in the catalytic domain of F(1) is coupled via a rotary mechanism of the central stalk subunits to proton translocation. Functionally, this protein is part of the stalk that links CF(0) to CF(1). It either transmits conformational changes from CF(0) to CF(1) or is implicated in proton conduction. The chain is ATP synthase subunit delta from Alkaliphilus metalliredigens (strain QYMF).